Here is a 148-residue protein sequence, read N- to C-terminus: Flavodoxin (148 aa).

Residues 4–145 form the Flavodoxin-like domain; that stretch reads VLIVYGSTTG…DVSAWAGRVV (142 aa).

This sequence belongs to the flavodoxin family. FMN serves as cofactor.

Functionally, low-potential electron donor to a number of redox enzymes. The protein is Flavodoxin of Nitratidesulfovibrio vulgaris (strain DSM 19637 / Miyazaki F) (Desulfovibrio vulgaris).